Consider the following 102-residue polypeptide: RNA-binding protein Hfq (102 aa).

Positions 9 to 68 constitute a Sm domain; sequence DPFLNALRRERVPVSIYLVNGIKLQGQIESFDQFVILLKNTVSQMVYKHAISTVVPSRPV. The segment at 63-102 is disordered; that stretch reads VPSRPVSHHSNNAGGSTSSNYHHGSSAQNTSAQQDSEENE. Positions 70-96 are enriched in polar residues; that stretch reads HHSNNAGGSTSSNYHHGSSAQNTSAQQ.

It belongs to the Hfq family. As to quaternary structure, homohexamer.

Functionally, RNA chaperone that binds small regulatory RNA (sRNAs) and mRNAs to facilitate mRNA translational regulation in response to envelope stress, environmental stress and changes in metabolite concentrations. Also binds with high specificity to tRNAs. The chain is RNA-binding protein Hfq from Escherichia coli O17:K52:H18 (strain UMN026 / ExPEC).